The sequence spans 165 residues: Large ribosomal subunit protein mL49 (165 aa).

Residues 42-75 (TTATTTTPLQQQQQQQPTTQPTTPIQTQTGAAPT) are compositionally biased toward low complexity. The segment at 42–81 (TTATTTTPLQQQQQQQPTTQPTTPIQTQTGAAPTESTKPV) is disordered.

The protein belongs to the mitochondrion-specific ribosomal protein mL49 family. As to quaternary structure, component of the mitochondrial large ribosomal subunit (mt-LSU). Mature N.crassa 74S mitochondrial ribosomes consist of a small (37S) and a large (54S) subunit. The 37S small subunit contains a 16S ribosomal RNA (16S mt-rRNA) and 32 different proteins. The 54S large subunit contains a 23S rRNA (23S mt-rRNA) and 42 different proteins.

Its subcellular location is the mitochondrion. Component of the mitochondrial ribosome (mitoribosome), a dedicated translation machinery responsible for the synthesis of mitochondrial genome-encoded proteins, including at least some of the essential transmembrane subunits of the mitochondrial respiratory chain. The mitoribosomes are attached to the mitochondrial inner membrane and translation products are cotranslationally integrated into the membrane. This Neurospora crassa (strain ATCC 24698 / 74-OR23-1A / CBS 708.71 / DSM 1257 / FGSC 987) protein is Large ribosomal subunit protein mL49 (img2).